Consider the following 310-residue polypeptide: Porphobilinogen deaminase (310 aa).

Cys-243 carries the post-translational modification S-(dipyrrolylmethanemethyl)cysteine.

Belongs to the HMBS family. In terms of assembly, monomer. Dipyrromethane serves as cofactor.

It carries out the reaction 4 porphobilinogen + H2O = hydroxymethylbilane + 4 NH4(+). It participates in porphyrin-containing compound metabolism; protoporphyrin-IX biosynthesis; coproporphyrinogen-III from 5-aminolevulinate: step 2/4. Functionally, tetrapolymerization of the monopyrrole PBG into the hydroxymethylbilane pre-uroporphyrinogen in several discrete steps. The protein is Porphobilinogen deaminase of Mannheimia succiniciproducens (strain KCTC 0769BP / MBEL55E).